The chain runs to 534 residues: MTKYIFVTGGVVSSIGKGIVAASLGRLLKNRGLKVTIQKFDPYINIDPGTMSPYQHGEVYVTDDGAETDLDLGHYERFIDINLNKYSNVTTGKIYSEVLRKERKGEYLGATVQVIPHITDALKEKIKRAASTTDSDVIITEVGGTVGDIESLPFLEALRQMKADVGSENVMYIHTTLLPYLKAAGEMKTKPTQHSVKELRGLGIQPNMLVIRTEEPVEQGIKNKLAQFCDVNSEAVIESRNVEHLYQIPLNLQAQSMDQIVCDHLKLNAPQADMTEWSAMVDKVMNLRKTTKIALVGKYVELPDAYLSVVEALKHSGYANDTAIDLKWVNANDVTVDNAADLLGDADGIIVPGGFGQRGTEGKIQAIRYARENDVPMLGICLGMQLTCVEFARHVLNMEGANSFELEPSTKYPIIDIMRDQIDIEDMGGTLRLGLYPCKLKPGSKAAMAYNNQEVVQRRHRHRYEFNNKFRPEFEAAGFVFSGVSPDNRLVEIVELKEKKFFVAAQYHPELQSRPNRPEELYTAFVTAAIKNSN.

An amidoligase domain region spans residues 1 to 267 (MTKYIFVTGG…DQIVCDHLKL (267 aa)). Position 13 (S13) interacts with CTP. Residue S13 participates in UTP binding. Residue 14-19 (SIGKGI) participates in ATP binding. Residue Y54 participates in L-glutamine binding. An ATP-binding site is contributed by D71. Residues D71 and E141 each contribute to the Mg(2+) site. CTP is bound by residues 148 to 150 (DIE), 188 to 193 (KTKPTQ), and K224. UTP contacts are provided by residues 188-193 (KTKPTQ) and K224. 240-242 (RNV) lines the ATP pocket. In terms of domain architecture, Glutamine amidotransferase type-1 spans 292–534 (KIALVGKYVE…FVTAAIKNSN (243 aa)). G354 contacts L-glutamine. Catalysis depends on C381, which acts as the Nucleophile; for glutamine hydrolysis. L-glutamine is bound by residues 382–385 (LGMQ), E405, and R463. Catalysis depends on residues H508 and E510.

The protein belongs to the CTP synthase family. Homotetramer.

The catalysed reaction is UTP + L-glutamine + ATP + H2O = CTP + L-glutamate + ADP + phosphate + 2 H(+). It carries out the reaction L-glutamine + H2O = L-glutamate + NH4(+). The enzyme catalyses UTP + NH4(+) + ATP = CTP + ADP + phosphate + 2 H(+). The protein operates within pyrimidine metabolism; CTP biosynthesis via de novo pathway; CTP from UDP: step 2/2. Its activity is regulated as follows. Allosterically activated by GTP, when glutamine is the substrate; GTP has no effect on the reaction when ammonia is the substrate. The allosteric effector GTP functions by stabilizing the protein conformation that binds the tetrahedral intermediate(s) formed during glutamine hydrolysis. Inhibited by the product CTP, via allosteric rather than competitive inhibition. Functionally, catalyzes the ATP-dependent amination of UTP to CTP with either L-glutamine or ammonia as the source of nitrogen. Regulates intracellular CTP levels through interactions with the four ribonucleotide triphosphates. The sequence is that of CTP synthase from Streptococcus pyogenes serotype M28 (strain MGAS6180).